The sequence spans 530 residues: Cytochrome P450 78A6 (530 aa).

The chain crosses the membrane as a helical span at residues 25–45 (LAFSLLAVTIIWLAISLFLWT). Cys-474 lines the heme pocket.

The protein belongs to the cytochrome P450 family. The cofactor is heme. As to expression, expressed in leaves, sepals, petals, stamens, carpels and developing ovules.

It localises to the membrane. Its function is as follows. Plays a role in seed and fruit development. Functions probably in association with CYP78A9 in the regulation of seed growth. Acts maternally to promote seed growth. The polypeptide is Cytochrome P450 78A6 (CYP78A6) (Arabidopsis thaliana (Mouse-ear cress)).